The primary structure comprises 223 residues: Global nitrogen regulator (223 aa).

The region spanning 143–216 (RDMGSRLVSF…KKKITVHKPV (74 aa)) is the HTH crp-type domain. A DNA-binding region (H-T-H motif) is located at residues 176–195 (HQAIAEAIGSTRVTVTRLLG).

Required for full expression of proteins subject to ammonium repression. Transcriptional activator of genes subject to nitrogen control. Functionally, has affinity for the xisA upstream region. Binds to a 66 bp region containing three repeats of the consensus recognition sequence 5'-ACATT-3'. The chain is Global nitrogen regulator (ntcA) from Nostoc sp. (strain PCC 7120 / SAG 25.82 / UTEX 2576).